The chain runs to 432 residues: Putative D-alanyl-D-alanine carboxypeptidase (432 aa).

Residues 7-25 (ATVLLTFSLSAFAVEYPVL) traverse the membrane as a helical; Signal-anchor segment.

Belongs to the peptidase S12 family. YfeW subfamily.

The protein resides in the cell inner membrane. It carries out the reaction Preferential cleavage: (Ac)2-L-Lys-D-Ala-|-D-Ala. Also transpeptidation of peptidyl-alanyl moieties that are N-acyl substituents of D-alanine.. The polypeptide is Putative D-alanyl-D-alanine carboxypeptidase (Salmonella agona (strain SL483)).